A 379-amino-acid polypeptide reads, in one-letter code: Succinyl-diaminopimelate desuccinylase (379 aa).

Position 70 (histidine 70) interacts with Zn(2+). Aspartate 72 is a catalytic residue. Aspartate 103 provides a ligand contact to Zn(2+). Glutamate 137 functions as the Proton acceptor in the catalytic mechanism. Zn(2+) is bound by residues glutamate 138, glutamate 166, and histidine 352.

It belongs to the peptidase M20A family. DapE subfamily. As to quaternary structure, homodimer. Zn(2+) serves as cofactor. The cofactor is Co(2+).

The enzyme catalyses N-succinyl-(2S,6S)-2,6-diaminopimelate + H2O = (2S,6S)-2,6-diaminopimelate + succinate. The protein operates within amino-acid biosynthesis; L-lysine biosynthesis via DAP pathway; LL-2,6-diaminopimelate from (S)-tetrahydrodipicolinate (succinylase route): step 3/3. Catalyzes the hydrolysis of N-succinyl-L,L-diaminopimelic acid (SDAP), forming succinate and LL-2,6-diaminopimelate (DAP), an intermediate involved in the bacterial biosynthesis of lysine and meso-diaminopimelic acid, an essential component of bacterial cell walls. The protein is Succinyl-diaminopimelate desuccinylase of Shewanella baltica (strain OS195).